A 200-amino-acid polypeptide reads, in one-letter code: Nucleoside triphosphate pyrophosphatase (200 aa).

Asp79 (proton acceptor) is an active-site residue.

It belongs to the Maf family. The cofactor is a divalent metal cation.

The protein resides in the cytoplasm. The enzyme catalyses a ribonucleoside 5'-triphosphate + H2O = a ribonucleoside 5'-phosphate + diphosphate + H(+). It carries out the reaction a 2'-deoxyribonucleoside 5'-triphosphate + H2O = a 2'-deoxyribonucleoside 5'-phosphate + diphosphate + H(+). Its function is as follows. Nucleoside triphosphate pyrophosphatase. May have a dual role in cell division arrest and in preventing the incorporation of modified nucleotides into cellular nucleic acids. This is Nucleoside triphosphate pyrophosphatase from Legionella pneumophila (strain Lens).